A 118-amino-acid polypeptide reads, in one-letter code: Large ribosomal subunit protein bL20 (118 aa).

Belongs to the bacterial ribosomal protein bL20 family.

Its function is as follows. Binds directly to 23S ribosomal RNA and is necessary for the in vitro assembly process of the 50S ribosomal subunit. It is not involved in the protein synthesizing functions of that subunit. This is Large ribosomal subunit protein bL20 from Lactobacillus acidophilus (strain ATCC 700396 / NCK56 / N2 / NCFM).